Here is a 190-residue protein sequence, read N- to C-terminus: Elongation factor P 2 (190 aa).

It belongs to the elongation factor P family.

The protein localises to the cytoplasm. Its pathway is protein biosynthesis; polypeptide chain elongation. Involved in peptide bond synthesis. Stimulates efficient translation and peptide-bond synthesis on native or reconstituted 70S ribosomes in vitro. Probably functions indirectly by altering the affinity of the ribosome for aminoacyl-tRNA, thus increasing their reactivity as acceptors for peptidyl transferase. The polypeptide is Elongation factor P 2 (efp2) (Protochlamydia amoebophila (strain UWE25)).